We begin with the raw amino-acid sequence, 274 residues long: Malonyl-[acyl-carrier protein] O-methyltransferase (274 aa).

Belongs to the methyltransferase superfamily.

It carries out the reaction malonyl-[ACP] + S-adenosyl-L-methionine = malonyl-[ACP] methyl ester + S-adenosyl-L-homocysteine. Its pathway is cofactor biosynthesis; biotin biosynthesis. Its function is as follows. Converts the free carboxyl group of a malonyl-thioester to its methyl ester by transfer of a methyl group from S-adenosyl-L-methionine (SAM). It allows to synthesize pimeloyl-ACP via the fatty acid synthetic pathway. This chain is Malonyl-[acyl-carrier protein] O-methyltransferase, found in Bacteroides helcogenes (strain ATCC 35417 / DSM 20613 / JCM 6297 / CCUG 15421 / P 36-108).